The following is a 320-amino-acid chain: FHA domain-containing protein FHA2 (320 aa).

Ala-2 carries the N-acetylalanine modification. One can recognise an FHA domain in the interval 32–89 (IILGRNSKKATVDVDLSSLGGGMNISRNHARIFYDFTRRRFSLEVLGKNGCLVEGVLH). The segment at 138 to 211 (VPYHNYQSGP…REGRSKVDRE (74 aa)) is disordered. Positions 163–178 (EYDDEDDDDDDDEEDD) are enriched in acidic residues. A compositionally biased stretch (basic and acidic residues) spans 198 to 210 (GEKKREGRSKVDR).

As to expression, widely expressed.

It is found in the nucleus. In terms of biological role, may play a role in the control of plant organ development and specifically in the regulation of stamen development. Does not show transactivation activity in yeast. The sequence is that of FHA domain-containing protein FHA2 from Arabidopsis thaliana (Mouse-ear cress).